Here is a 314-residue protein sequence, read N- to C-terminus: 4-hydroxy-3-methylbut-2-enyl diphosphate reductase (314 aa).

C12 provides a ligand contact to [4Fe-4S] cluster. (2E)-4-hydroxy-3-methylbut-2-enyl diphosphate is bound by residues H41 and H74. The dimethylallyl diphosphate site is built by H41 and H74. Isopentenyl diphosphate contacts are provided by H41 and H74. A [4Fe-4S] cluster-binding site is contributed by C96. H124 contacts (2E)-4-hydroxy-3-methylbut-2-enyl diphosphate. Position 124 (H124) interacts with dimethylallyl diphosphate. H124 is an isopentenyl diphosphate binding site. Catalysis depends on E126, which acts as the Proton donor. Residue T167 coordinates (2E)-4-hydroxy-3-methylbut-2-enyl diphosphate. C197 contributes to the [4Fe-4S] cluster binding site. 4 residues coordinate (2E)-4-hydroxy-3-methylbut-2-enyl diphosphate: S225, S226, N227, and S269. S225, S226, N227, and S269 together coordinate dimethylallyl diphosphate. Residues S225, S226, N227, and S269 each coordinate isopentenyl diphosphate.

It belongs to the IspH family. [4Fe-4S] cluster serves as cofactor.

The enzyme catalyses isopentenyl diphosphate + 2 oxidized [2Fe-2S]-[ferredoxin] + H2O = (2E)-4-hydroxy-3-methylbut-2-enyl diphosphate + 2 reduced [2Fe-2S]-[ferredoxin] + 2 H(+). It catalyses the reaction dimethylallyl diphosphate + 2 oxidized [2Fe-2S]-[ferredoxin] + H2O = (2E)-4-hydroxy-3-methylbut-2-enyl diphosphate + 2 reduced [2Fe-2S]-[ferredoxin] + 2 H(+). The protein operates within isoprenoid biosynthesis; dimethylallyl diphosphate biosynthesis; dimethylallyl diphosphate from (2E)-4-hydroxy-3-methylbutenyl diphosphate: step 1/1. It functions in the pathway isoprenoid biosynthesis; isopentenyl diphosphate biosynthesis via DXP pathway; isopentenyl diphosphate from 1-deoxy-D-xylulose 5-phosphate: step 6/6. Catalyzes the conversion of 1-hydroxy-2-methyl-2-(E)-butenyl 4-diphosphate (HMBPP) into a mixture of isopentenyl diphosphate (IPP) and dimethylallyl diphosphate (DMAPP). Acts in the terminal step of the DOXP/MEP pathway for isoprenoid precursor biosynthesis. This chain is 4-hydroxy-3-methylbut-2-enyl diphosphate reductase, found in Haemophilus ducreyi (strain 35000HP / ATCC 700724).